Reading from the N-terminus, the 92-residue chain is Small ribosomal subunit protein uS19 (92 aa).

Residues 73–92 (EFSPTRSFRGHAGAKNKGKK) are disordered. Positions 80–92 (FRGHAGAKNKGKK) are enriched in basic residues.

Belongs to the universal ribosomal protein uS19 family.

Functionally, protein S19 forms a complex with S13 that binds strongly to the 16S ribosomal RNA. The polypeptide is Small ribosomal subunit protein uS19 (Flavobacterium psychrophilum (strain ATCC 49511 / DSM 21280 / CIP 103535 / JIP02/86)).